Consider the following 266-residue polypeptide: Zinc finger protein CG30 (266 aa).

An RING-type zinc finger spans residues 8 to 63 (CNICFSVAEIKNYFMQPIDRLTMIPVLELDTCKHQLCSMCIRKIRKRKKTPCPLCR).

The protein localises to the host nucleus. Functionally, plays a role in the proper expression of late and very late genes. The polypeptide is Zinc finger protein CG30 (CG30) (Bombyx mori nuclear polyhedrosis virus (BmNPV)).